The chain runs to 257 residues: Nuclear receptor subfamily 0 group B member 2 (257 aa).

The region spanning 16 to 257 (SRPAILYALL…GLLGDMLLLR (242 aa)) is the NR LBD domain. R57 is subject to Symmetric dimethylarginine; by PRMT5.

Belongs to the nuclear hormone receptor family. NR0 subfamily. Interacts (via N-terminus) with NEUROD1 (via N-terminus and C-terminus). Interacts with ID2. Interacts with RORG, NFIL3, NR1D1 and BHLHE41. Heterodimer; efficient DNA binding requires dimerization with another bHLH protein. Interacts with RARA, RXRA, THRB, NR5A1, NR5A2, NR1I3, PPARA, PPARG and EID1. Interacts with HNF4A; the resulting heterodimer is transcriptionally inactive. Interacts with DDX3X; this interaction disrupts the interaction between HNF4 and NR0B2/SHP that forms inactive heterodimers and enhances the formation of active HNF4 homodimers. Post-translationally, arginine methylation by PRMT5 enhances repression activity of metabolic genes in liver in response to bile acid signaling, by increasing interaction with cofactors. As to expression, liver. Low levels of expression were detected in heart and pancreas.

The protein resides in the nucleus. The protein localises to the cytoplasm. Transcriptional regulator that acts as a negative regulator of receptor-dependent signaling pathways. Specifically inhibits transactivation of the nuclear receptor with which it interacts. Inhibits transcriptional activity of NEUROD1 on E-box-containing promoter by interfering with the coactivation function of the p300/CBP-mediated transcription complex for NEUROD1. Essential component of the liver circadian clock which via its interaction with NR1D1 and RORG regulates NPAS2-mediated hepatic lipid metabolism. Regulates the circadian expression of cytochrome P450 (CYP) enzymes. Represses: NR5A2 and HNF4A to down-regulate CYP2C38, NFLI3 to up-regulate CYP2A5, BHLHE41/HNF1A axis to up-regulate CYP1A2, CYP2E1 and CYP3A11, and NR1D1 to up-regulate CYP2B10, CYP4A10 and CYP4A14. The polypeptide is Nuclear receptor subfamily 0 group B member 2 (NR0B2) (Homo sapiens (Human)).